The sequence spans 84 residues: Putative protein BCE-1 (84 aa).

This Homo sapiens (Human) protein is Putative protein BCE-1 (BCE1).